The following is a 255-amino-acid chain: MLAKRILPCLDVKAGRVVKGVNFVDLRDAGDPVELAQAYDAAGADELVFLDIAATHEERQILVDVVYRTAEQVFIPLTVSGGINDLETIRQLPRAGADKVSINSAAARDPDLIRRASDRFGSQCIVVAIDARRRTDPDNPGWDVYVRGGRENTGIDALTWAETVARNGAGELLVTSMDADGTQAGYDLELTRAIADRVEIPVIASGGAGTCEDIAEAFRTGHAEAALLASLLHYGQLTIAEIKDHLRSAQIPTRP.

Active-site residues include Asp11 and Asp130.

It belongs to the HisA/HisF family. In terms of assembly, heterodimer of HisH and HisF.

It is found in the cytoplasm. It carries out the reaction 5-[(5-phospho-1-deoxy-D-ribulos-1-ylimino)methylamino]-1-(5-phospho-beta-D-ribosyl)imidazole-4-carboxamide + L-glutamine = D-erythro-1-(imidazol-4-yl)glycerol 3-phosphate + 5-amino-1-(5-phospho-beta-D-ribosyl)imidazole-4-carboxamide + L-glutamate + H(+). Its pathway is amino-acid biosynthesis; L-histidine biosynthesis; L-histidine from 5-phospho-alpha-D-ribose 1-diphosphate: step 5/9. In terms of biological role, IGPS catalyzes the conversion of PRFAR and glutamine to IGP, AICAR and glutamate. The HisF subunit catalyzes the cyclization activity that produces IGP and AICAR from PRFAR using the ammonia provided by the HisH subunit. This is Imidazole glycerol phosphate synthase subunit HisF from Synechococcus sp. (strain ATCC 27144 / PCC 6301 / SAUG 1402/1) (Anacystis nidulans).